A 308-amino-acid chain; its full sequence is tRNA pseudouridine synthase B (308 aa).

The Nucleophile role is filled by aspartate 47.

The protein belongs to the pseudouridine synthase TruB family. Type 1 subfamily.

The catalysed reaction is uridine(55) in tRNA = pseudouridine(55) in tRNA. Its function is as follows. Responsible for synthesis of pseudouridine from uracil-55 in the psi GC loop of transfer RNAs. This is tRNA pseudouridine synthase B from Xanthomonas euvesicatoria pv. vesicatoria (strain 85-10) (Xanthomonas campestris pv. vesicatoria).